The primary structure comprises 231 residues: Small ribosomal subunit protein uS5 (231 aa).

An S5 DRBM domain is found at 61–124; it reads KFRSKKPYRM…NRAKLNIIKV (64 aa).

The protein belongs to the universal ribosomal protein uS5 family. As to quaternary structure, part of the 30S ribosomal subunit. Contacts protein S4.

With S4 and S12 plays an important role in translational accuracy. This chain is Small ribosomal subunit protein uS5, found in Nanoarchaeum equitans (strain Kin4-M).